Here is a 92-residue protein sequence, read N- to C-terminus: Bombyxin A-4 (92 aa).

A signal peptide spans 1 to 19 (MKILLAIALMLSTVMWVST). Gln-20 carries the post-translational modification Pyrrolidone carboxylic acid. Disulfide bonds link Cys-29–Cys-79, Cys-41–Cys-92, and Cys-78–Cys-83. A propeptide spans 50 to 70 (SGAQFASYGSAWLMPYSEGRG) (c peptide like).

Belongs to the insulin family. Heterodimer of a B chain and an A chain linked by two disulfide bonds.

It is found in the secreted. Functionally, brain peptide responsible for activation of prothoracic glands to produce ecdysone in insects. In Bombyx mori (Silk moth), this protein is Bombyxin A-4 (BBXA4).